Here is a 138-residue protein sequence, read N- to C-terminus: Calmodulin-beta (138 aa).

4 EF-hand domains span residues 1 to 32 (EFKE…LGQN), 33 to 68 (PTEA…KMKE), 70 to 105 (DSEE…LGEK), and 106 to 138 (LTDE…MTSK). Ca(2+) is bound by residues Asp-10, Asp-12, Asp-14, Thr-16, Glu-21, Asp-46, Asp-48, Asn-50, Thr-52, Glu-57, Asp-83, Asp-85, Asn-87, Glu-94, Asp-119, Asp-121, Asp-123, Gln-125, and Glu-130.

This sequence belongs to the calmodulin family.

In terms of biological role, calmodulin mediates the control of a large number of enzymes, ion channels and other proteins by Ca(2+). Among the enzymes to be stimulated by the calmodulin-Ca(2+) complex are a number of protein kinases and phosphatases. In Arbacia punctulata (Punctuate sea urchin), this protein is Calmodulin-beta.